We begin with the raw amino-acid sequence, 347 residues long: Subtilase cytotoxin subunit A (347 aa).

The first 21 residues, 1–21 (MLKILWTYILFLLFISASARA), serve as a signal peptide directing secretion. The 304-residue stretch at 24–327 (PWYFDAIGLT…GRVLNAEKAI (304 aa)) folds into the Peptidase S8 domain. Active-site charge relay system residues include Asp52, His89, and Ser272. A disulfide bridge connects residues Cys288 and Cys331. Positions 322-347 (NAEKAISMFCKKNYIPVRQGRMSEEL) are A2 domain. Residues 344-347 (SEEL) carry the Prevents secretion from ER motif.

It belongs to the peptidase S8 family. In terms of assembly, forms a complex with SubB with the stoichiometry SubA1:SubB5 (called SubAB5).

The protein localises to the secreted. Its subcellular location is the host cytoplasm. The protein resides in the host cytosol. It is found in the host endoplasmic reticulum lumen. In terms of biological role, protease subunit of subtilase cytotoxin SubAB5. An endoprotease specific for host endoplasmic reticulum (ER) chaperone BiP/HSPA5, has no activity on human HSP70 or HSPA8. Cleaves between 'Leu-416' and 'Leu-417' of BiP/HSPA5 in the hinge between BiP's ATPase and protein-binding domains. This induces host ER stress response and eventual cell death. Culture supernatant of E.coli expressing both subA and subB are toxic for Vero cells (African green monkey kidney cell line), Chinese hamster ovary cells and Hct-8 cells (human colonic epithelial cell line); the subunits are not toxic individually. Purified SubAB5 is highly toxic, &lt;0.1 pg is able to kill at least 50% of 30'000 Vero cells in a microtiter plate assay after 3 days; no cytotoxicity is seen at 24 hours. Preabsorption with cells expressing a ganglioside GM2 mimic reduced cytotoxicity of SubAB5 by 93% in the Vero cytotoxicity assay. Intraperitoneal injection of 200 ng of purified SubAB5 kills mice; the higher the dose the faster the mice die. Animals injected intraperitoneally with purified SubAB5 have microvascular thrombi in the brain and other organs, including the renal tubules and glomeruli. Injection induces an unfolded response in mice. Mice fed E.coli cells expressing cloned SubAB5 experience drastic weight loss and appear ill and lethargic. Protein synthesis in Vero cells is transiently inhibited by SubAB5; both subunits are required for this effect. Inhibition of protein synthesis is prevented by brefeldin A; cells are arrested in the G1 phase. SubAB5 at 100 ng/ml induced caspase-dependent apoptosis in Vero cells through mitochondrial membrane damage. The sequence is that of Subtilase cytotoxin subunit A from Escherichia coli.